Consider the following 385-residue polypeptide: Glutamate 5-kinase (385 aa).

K17 contacts ATP. Substrate contacts are provided by S64, D151, and N165. 185 to 186 is a binding site for ATP; the sequence is SD. The PUA domain maps to 291 to 367; sequence SGTVRVDAGA…NQIDNILGYN (77 aa).

Belongs to the glutamate 5-kinase family.

The protein resides in the cytoplasm. The catalysed reaction is L-glutamate + ATP = L-glutamyl 5-phosphate + ADP. Its pathway is amino-acid biosynthesis; L-proline biosynthesis; L-glutamate 5-semialdehyde from L-glutamate: step 1/2. Its function is as follows. Catalyzes the transfer of a phosphate group to glutamate to form L-glutamate 5-phosphate. This is Glutamate 5-kinase from Methanosarcina acetivorans (strain ATCC 35395 / DSM 2834 / JCM 12185 / C2A).